The sequence spans 265 residues: Enolase-phosphatase E1 (265 aa).

Mg(2+) contacts are provided by Asp18 and Glu20. Residues 144 to 145 (SS) and Lys188 contribute to the substrate site. Residue Asp215 coordinates Mg(2+).

The protein belongs to the HAD-like hydrolase superfamily. MasA/MtnC family. As to quaternary structure, monomer. Mg(2+) is required as a cofactor.

It localises to the cytoplasm. The protein resides in the nucleus. The enzyme catalyses 5-methylsulfanyl-2,3-dioxopentyl phosphate + H2O = 1,2-dihydroxy-5-(methylsulfanyl)pent-1-en-3-one + phosphate. Its pathway is amino-acid biosynthesis; L-methionine biosynthesis via salvage pathway; L-methionine from S-methyl-5-thio-alpha-D-ribose 1-phosphate: step 3/6. The protein operates within amino-acid biosynthesis; L-methionine biosynthesis via salvage pathway; L-methionine from S-methyl-5-thio-alpha-D-ribose 1-phosphate: step 4/6. Functionally, bifunctional enzyme that catalyzes the enolization of 2,3-diketo-5-methylthiopentyl-1-phosphate (DK-MTP-1-P) into the intermediate 2-hydroxy-3-keto-5-methylthiopentenyl-1-phosphate (HK-MTPenyl-1-P), which is then dephosphorylated to form the acireductone 1,2-dihydroxy-3-keto-5-methylthiopentene (DHK-MTPene). The chain is Enolase-phosphatase E1 from Candida albicans (strain SC5314 / ATCC MYA-2876) (Yeast).